The sequence spans 527 residues: Berberine bridge enzyme-like 10 (527 aa).

Residues 1–20 (MEKLLVISLLLLISTSVTTS) form the signal peptide. An intrachain disulfide couples Cys32 to Cys95. N-linked (GlcNAc...) asparagine glycosylation is present at Asn53. The region spanning 73–248 (TTPKPISVVA…LGYKIQLVPV (176 aa)) is the FAD-binding PCMH-type domain. Pros-8alpha-FAD histidine is present on His110. 2 N-linked (GlcNAc...) asparagine glycosylation sites follow: Asn137 and Asn293.

It belongs to the oxygen-dependent FAD-linked oxidoreductase family. FAD serves as cofactor.

It is found in the secreted. It localises to the cell wall. The chain is Berberine bridge enzyme-like 10 from Arabidopsis thaliana (Mouse-ear cress).